A 611-amino-acid chain; its full sequence is MSEIPSTIVSKNMTNDKNSLESMNISSSSSTEENPKKQARKNEEHGPDPSANPFHLSGDVDFFLLRDQERNKALSERQQQKTMRVHQKMTYSSKVSAKHTSLRRQLQLEDKQEDLEARAEAEHQRAFRDYTTWKLTLTKEKNVEPENMSGYIKQKRQMFLLQYALDVKRREIQRLETLATKEEARLERAEKSLEKDAALFDEFVRENDCSSVQAMRAAEKETKAKIEKILEIRDLTTQIVNIKSEISRFEDTLKHYKVYKDFLYKLSPKEWLEEQEKKHSFLKKAKEVSEASKESSVNSTPGDKGPGIKGKASSMWAKEGQGTKKPWRFLQTMRLGRSPSYLSSPQQGSQPSESSGGDSRGSNSPIPPTQEDTDSDGEEPQLYFTEPQQLLDVFRELEEQNLSLIQNSQETEKTLEELSHTLKHTQIRMDREVNQLKQWVTTMMMSITKEEDTAAELELKARVFHFGEYKGDQQDKLLESLNCKVLDVYRHCTGTQQEANLGTVQMLTIIEHQLDELLENLEHVPQVKIEQAERAKEKERRIRLREEKLQMQKILQEEHLQRARARAQAEIKKKRGRTLVCRSRPPAHRIKQQSEHTLMDKEEEELLFFFT.

A compositionally biased stretch (polar residues) spans 1–17 (MSEIPSTIVSKNMTNDK). The tract at residues 1-57 (MSEIPSTIVSKNMTNDKNSLESMNISSSSSTEENPKKQARKNEEHGPDPSANPFHLS) is disordered. Residues 20-32 (LESMNISSSSSTE) are compositionally biased toward low complexity. Basic and acidic residues predominate over residues 33-47 (ENPKKQARKNEEHGP). Coiled coils occupy residues 101–128 (SLRRQLQLEDKQEDLEARAEAEHQRAFR), 164–203 (ALDVKRREIQRLETLATKEEARLERAEKSLEKDAALFDEF), and 230–257 (LEIRDLTTQIVNIKSEISRFEDTLKHYK). 2 disordered regions span residues 287–323 (EVSEASKESSVNSTPGDKGPGIKGKASSMWAKEGQGT) and 338–380 (SPSY…GEEP). The span at 338 to 357 (SPSYLSSPQQGSQPSESSGG) shows a compositional bias: low complexity. Coiled coils occupy residues 393–432 (VFRELEEQNLSLIQNSQETEKTLEELSHTLKHTQIRMDRE) and 526–578 (QVKI…RGRT).

Belongs to the CFAP100 family.

The protein localises to the cytoplasm. It is found in the cytoskeleton. The protein resides in the cilium axoneme. Its function is as follows. May play a role in ciliary/flagellar motility by regulating the assembly and the activity of axonemal inner dynein arm. The polypeptide is Cilia- and flagella-associated protein 100 (Homo sapiens (Human)).